A 100-amino-acid chain; its full sequence is Protamine-2 (100 aa).

Positions 1-45 (MVRYHVRSPSERPHREYRQLVNGQEQGRHGQEEQGMSAEGVEGYG) are disordered. A phosphoserine mark is found at serine 8, serine 10, and serine 37. Residues 8-18 (SPSERPHREYR) are compositionally biased toward basic and acidic residues.

It belongs to the protamine P2 family. Interacts with TDRP. Post-translationally, proteolytic processing into mature chains is required for histone eviction during spermatogenesis. Transition proteins (TNP1 and TNP2) are required for processing. In terms of tissue distribution, testis.

Its subcellular location is the nucleus. It localises to the chromosome. In terms of biological role, protamines substitute for histones in the chromatin of sperm during the haploid phase of spermatogenesis. They compact sperm DNA into a highly condensed, stable and inactive complex. The polypeptide is Protamine-2 (PRM2) (Alouatta seniculus (Red howler monkey)).